Reading from the N-terminus, the 137-residue chain is ATP synthase epsilon chain, chloroplastic (137 aa).

The protein belongs to the ATPase epsilon chain family. F-type ATPases have 2 components, CF(1) - the catalytic core - and CF(0) - the membrane proton channel. CF(1) has five subunits: alpha(3), beta(3), gamma(1), delta(1), epsilon(1). CF(0) has three main subunits: a, b and c.

The protein resides in the plastid. Its subcellular location is the chloroplast thylakoid membrane. Produces ATP from ADP in the presence of a proton gradient across the membrane. The polypeptide is ATP synthase epsilon chain, chloroplastic (Sorghum bicolor (Sorghum)).